A 510-amino-acid chain; its full sequence is MDIRAAEISAILKSQIANFGEEAAVSDVGQVLSVGDGIARIYGLDNVQAGEMVEFPKAGVKGMALNLERDNVGAVIFGQDQAIKEGDEVRRLGEIVDVPVGRGLLGRVVNPLGEPIDGKGPIVSTERRRVDVKAPGIIPRKSVHEPVQTGLKSIDTLIPVGRGQRELIIGDRQTGKTAVAIDTILNQKAANAGTDESAKLYCVYVAIGQKRSTVAQIVKTLEEHGALEYTIVVVASASEPAPLQYLAPFSGCAMGEWFRDNGLHGLIIYDDLSKQAVAYRQMSLLLRRPPGREAYPGDVFYLHSRLLERAAKLNEDNGSGSLTALPIIETQANDVSAYIPTNVISITDGQIFLETDLFYQGIRPAVNVGISVSRVGSSAQIKAMKQVAGAIKGELAQYREMAAFAKFGSDLDASTQKLLARGERLTELLKQPQYAPQAVEEQVCVIYAGTRGYLDNIPTSSVRRFESELLARLHSQHKDLLDNIRTKKALDKDLENTLKSVLDNFSATFA.

ATP is bound at residue 170–177 (GDRQTGKT).

This sequence belongs to the ATPase alpha/beta chains family. In terms of assembly, F-type ATPases have 2 components, CF(1) - the catalytic core - and CF(0) - the membrane proton channel. CF(1) has five subunits: alpha(3), beta(3), gamma(1), delta(1), epsilon(1). CF(0) has three main subunits: a(1), b(2) and c(9-12). The alpha and beta chains form an alternating ring which encloses part of the gamma chain. CF(1) is attached to CF(0) by a central stalk formed by the gamma and epsilon chains, while a peripheral stalk is formed by the delta and b chains.

It is found in the cell inner membrane. The catalysed reaction is ATP + H2O + 4 H(+)(in) = ADP + phosphate + 5 H(+)(out). Functionally, produces ATP from ADP in the presence of a proton gradient across the membrane. The alpha chain is a regulatory subunit. This Caulobacter sp. (strain K31) protein is ATP synthase subunit alpha.